A 151-amino-acid polypeptide reads, in one-letter code: UPF0098 protein MTH_273 (151 aa).

Belongs to the UPF0098 family.

In Methanothermobacter thermautotrophicus (strain ATCC 29096 / DSM 1053 / JCM 10044 / NBRC 100330 / Delta H) (Methanobacterium thermoautotrophicum), this protein is UPF0098 protein MTH_273.